Here is a 489-residue protein sequence, read N- to C-terminus: Probable transporter MCH1 (489 aa).

12 helical membrane-spanning segments follow: residues 34 to 54 (ISLI…FTPV), 68 to 88 (IIGS…GYLA), 94 to 114 (VLLS…AATV), 124 to 144 (LAIS…TALL), 156 to 175 (LTIS…GSRV), 196 to 216 (FSFL…VVSI), 262 to 282 (ISTY…EMYI), 302 to 324 (VAIH…DFLV), 335 to 355 (LLSI…STFV), 359 to 379 (YYII…LYPT), 403 to 423 (IGST…CGVF), and 463 to 483 (SLII…ILRI).

Belongs to the major facilitator superfamily.

It is found in the vacuole membrane. In terms of biological role, probable transporter. The sequence is that of Probable transporter MCH1 (MCH1) from Wickerhamomyces anomalus (Yeast).